A 419-amino-acid polypeptide reads, in one-letter code: Gamma-glutamyl phosphate reductase (419 aa).

Belongs to the gamma-glutamyl phosphate reductase family.

Its subcellular location is the cytoplasm. It carries out the reaction L-glutamate 5-semialdehyde + phosphate + NADP(+) = L-glutamyl 5-phosphate + NADPH + H(+). The protein operates within amino-acid biosynthesis; L-proline biosynthesis; L-glutamate 5-semialdehyde from L-glutamate: step 2/2. Functionally, catalyzes the NADPH-dependent reduction of L-glutamate 5-phosphate into L-glutamate 5-semialdehyde and phosphate. The product spontaneously undergoes cyclization to form 1-pyrroline-5-carboxylate. In Caldicellulosiruptor bescii (strain ATCC BAA-1888 / DSM 6725 / KCTC 15123 / Z-1320) (Anaerocellum thermophilum), this protein is Gamma-glutamyl phosphate reductase.